Here is a 397-residue protein sequence, read N- to C-terminus: Tryptophan synthase beta chain (397 aa).

Lys87 is modified (N6-(pyridoxal phosphate)lysine).

Belongs to the TrpB family. In terms of assembly, tetramer of two alpha and two beta chains. Requires pyridoxal 5'-phosphate as cofactor.

The enzyme catalyses (1S,2R)-1-C-(indol-3-yl)glycerol 3-phosphate + L-serine = D-glyceraldehyde 3-phosphate + L-tryptophan + H2O. It functions in the pathway amino-acid biosynthesis; L-tryptophan biosynthesis; L-tryptophan from chorismate: step 5/5. The beta subunit is responsible for the synthesis of L-tryptophan from indole and L-serine. This Salmonella choleraesuis (strain SC-B67) protein is Tryptophan synthase beta chain.